The sequence spans 189 residues: Small heat shock protein 21 (189 aa).

The tract at residues 26 to 53 (PPNFNPRKIAQGDNGKGQQVSRYGAGAG) is disordered. A sHSP domain is found at 77 to 183 (KYFVGFDDNV…HEKIVNIPIS (107 aa)).

Belongs to the small heat shock protein (HSP20) family.

Heat shock protein required for pathogenicity. Mediates thermotolerance and adaptation to oxidative stress and ethanol-induced stress. Required for invasive growth and filament formation under various filament inducing conditions. Plays a role in the capacity of damaging human-derived endothelial and oral epithelial cells during infection. Potentiates resistance to antifungal drugs, as well as resistance to killing by human neutrophils. Plays a major role in trehalose homeostasis in response to elevated temperatures. Regulates CEK1 activation by phosphorylation in response to elevated temperatures. The polypeptide is Small heat shock protein 21 (HSP21) (Candida albicans (strain SC5314 / ATCC MYA-2876) (Yeast)).